A 333-amino-acid chain; its full sequence is Multiheme cytochrome MtrA (333 aa).

Residues 1 to 34 (MKNSLKMKNLLPALVITMAMSAVMSLCIAPNAYA) form the signal peptide.

This is Multiheme cytochrome MtrA (mtrA) from Shewanella baltica (strain OS185).